The chain runs to 208 residues: Holliday junction resolvase RecU (208 aa).

The Mg(2+) site is built by Thr-87, Asp-89, Glu-102, and Gln-121.

Belongs to the RecU family. Mg(2+) serves as cofactor.

It is found in the cytoplasm. It catalyses the reaction Endonucleolytic cleavage at a junction such as a reciprocal single-stranded crossover between two homologous DNA duplexes (Holliday junction).. In terms of biological role, endonuclease that resolves Holliday junction intermediates in genetic recombination. Cleaves mobile four-strand junctions by introducing symmetrical nicks in paired strands. Promotes annealing of linear ssDNA with homologous dsDNA. Required for DNA repair, homologous recombination and chromosome segregation. In Staphylococcus aureus (strain Mu3 / ATCC 700698), this protein is Holliday junction resolvase RecU.